Here is a 263-residue protein sequence, read N- to C-terminus: Virulence plasmid protein pGP6-D-related protein (263 aa).

It belongs to the UPF0137 (pGP6-D) family.

This chain is Virulence plasmid protein pGP6-D-related protein, found in Chlamydia trachomatis serovar D (strain ATCC VR-885 / DSM 19411 / UW-3/Cx).